A 488-amino-acid polypeptide reads, in one-letter code: MIPVVALVGRPNVGKSTLFNRLTRTRDALVADFPGLTRDRKYGRAFLSGYEFIVVDTGGIDGTEEGIETKMAEQSLAAIEEADVVLFMTDARAGLTAADLSIAQHLRSREKTTFVVANKVDGIDADSACAEFWSLGLGEVYQMAASQGRGVTNMIEYALTPYAEAMGIERQGEEEVVDERQYTEEEAEAEQKRLQDLPIKLAIIGKPNVGKSTLTNRILGEERVVVYDEPGTTRDSIYIPMEREGREYVIIDTAGVRRRSKVHQVIEKFSVIKTLKAVEDANVVLLIIDAREGVAEQDLGLLGFALNAGRALVIAVNKWDGIDQGIKDRVKSELDRRLGFIDFARIHFISALHGTGVGHLFESIEEAYDSATRRVSTSMLTRIMQMSQDDHQPPLVNGRRVKLKYAHVGGYNPPIVVIHGNQVSRLPDSYKRYMMNYFRRSLKVVGTPIQLRFQEGDNPFENKTEKLTMSQERRRKRALSHIKDRKTK.

2 consecutive EngA-type G domains span residues 3 to 166 (PVVA…AEAM) and 199 to 372 (IKLA…DSAT). Residues 9-16 (GRPNVGKS), 56-60 (DTGGI), 118-121 (NKVD), 205-212 (GKPNVGKS), 252-256 (DTAGV), and 317-320 (NKWD) each bind GTP. In terms of domain architecture, KH-like spans 373-457 (RRVSTSMLTR…PIQLRFQEGD (85 aa)). Residues 469 to 488 (MSQERRRKRALSHIKDRKTK) form a disordered region. Residues 473-488 (RRRKRALSHIKDRKTK) are compositionally biased toward basic residues.

The protein belongs to the TRAFAC class TrmE-Era-EngA-EngB-Septin-like GTPase superfamily. EngA (Der) GTPase family. Associates with the 50S ribosomal subunit.

In terms of biological role, GTPase that plays an essential role in the late steps of ribosome biogenesis. In Shewanella sp. (strain W3-18-1), this protein is GTPase Der.